Here is a 152-residue protein sequence, read N- to C-terminus: Lipoprotein signal peptidase (152 aa).

3 helical membrane passes run 33–53 (VVPPAFYLTYIMNPGAAFGLL), 58–78 (MLFVTVTVIIIAGVLVGYFKI), and 83–102 (PVLDYGLGLVAGGALGNLAD). Catalysis depends on residues Asp-111 and Asp-125. Residues 120 to 140 (VFNLADTAIVTGAFLLAWALL) form a helical membrane-spanning segment.

Belongs to the peptidase A8 family.

It is found in the cell membrane. It carries out the reaction Release of signal peptides from bacterial membrane prolipoproteins. Hydrolyzes -Xaa-Yaa-Zaa-|-(S,diacylglyceryl)Cys-, in which Xaa is hydrophobic (preferably Leu), and Yaa (Ala or Ser) and Zaa (Gly or Ala) have small, neutral side chains.. It functions in the pathway protein modification; lipoprotein biosynthesis (signal peptide cleavage). Functionally, this protein specifically catalyzes the removal of signal peptides from prolipoproteins. The sequence is that of Lipoprotein signal peptidase from Pelotomaculum thermopropionicum (strain DSM 13744 / JCM 10971 / SI).